A 439-amino-acid polypeptide reads, in one-letter code: Acyl-lipid (8-3)-desaturase (439 aa).

The region spanning 7–88 (GRSAAREMTA…LPKLDASKVE (82 aa)) is the Cytochrome b5 heme-binding domain. Residues H40 and H66 each coordinate heme. The chain crosses the membrane as a helical span at residues 123–143 (IPHMIYRVVEIVALFALSFWL). Residues 171–175 (HEMGH) carry the Histidine box-1 motif. The short motif at 208–213 (HSKHHA) is the Histidine box-2 element. Transmembrane regions (helical) follow at residues 254–274 (AYLFAPVSCLLIGLGWTLYLH), 287–307 (FVWIFARYIGWFSLMGALGYS), and 312–332 (VGMYLCSFGLGCIYIFLQFAV). The Histidine box-3 motif lies at 376–380 (QIEHH).

The protein belongs to the fatty acid desaturase type 1 family. Fe(2+) is required as a cofactor.

The protein localises to the membrane. It catalyses the reaction an (8Z,11Z,14Z)-icosatrienoyl-containing glycerolipid + 2 Fe(II)-[cytochrome b5] + O2 + 2 H(+) = (5Z,8Z,11Z,14Z)-eicosatetraenoyl-containing glycerolipid + 2 Fe(III)-[cytochrome b5] + 2 H2O. The catalysed reaction is an (8Z,11Z,14Z,17Z)-eicosatetraenoyl-containing glycerolipid + 2 Fe(II)-[cytochrome b5] + O2 + 2 H(+) = a (5Z,8Z,11Z,14Z,17Z)-eicosapentaenoyl-containing glycerolipid + 2 Fe(III)-[cytochrome b5] + 2 H2O. Its function is as follows. Fatty acid desaturase that introduces a cis double bond at the 5-position in 20-carbon polyunsaturated fatty acids incorporated in a glycerolipid that contain a Delta(8) double bond. This Thraustochytrium sp protein is Acyl-lipid (8-3)-desaturase.